Consider the following 254-residue polypeptide: ATP synthase subunit a (254 aa).

A propeptide spans 1 to 6 (MAFLIH) (removed in mature form). Helical transmembrane passes span 32–52 (LTNL…LHIM), 83–103 (IGAA…FILI), 119–139 (SIMV…ILGL), 146–166 (FFSF…LVPI), 182–202 (LFAN…FLAP), 207–227 (TFII…IIGL), and 228–248 (EIAV…SYLK).

Belongs to the ATPase A chain family. F-type ATPases have 2 components, CF(1) - the catalytic core - and CF(0) - the membrane proton channel. CF(1) has five subunits: alpha(3), beta(3), gamma(1), delta(1), epsilon(1). CF(0) has three main subunits: a, b and c.

The protein localises to the mitochondrion inner membrane. Mitochondrial membrane ATP synthase (F(1)F(0) ATP synthase or Complex V) produces ATP from ADP in the presence of a proton gradient across the membrane which is generated by electron transport complexes of the respiratory chain. F-type ATPases consist of two structural domains, F(1) - containing the extramembraneous catalytic core and F(0) - containing the membrane proton channel, linked together by a central stalk and a peripheral stalk. During catalysis, ATP synthesis in the catalytic domain of F(1) is coupled via a rotary mechanism of the central stalk subunits to proton translocation. Key component of the proton channel; it may play a direct role in the translocation of protons across the membrane. The protein is ATP synthase subunit a (ATP6) of Mycosarcoma maydis (Corn smut fungus).